The sequence spans 909 residues: NADH-quinone oxidoreductase subunit G (909 aa).

A 2Fe-2S ferredoxin-type domain is found at 1-83; it reads MATIYVDGKE…GTYISIEDEE (83 aa). [2Fe-2S] cluster contacts are provided by Cys34, Cys45, Cys48, and Cys67. The 40-residue stretch at 83–122 folds into the 4Fe-4S His(Cys)3-ligated-type domain; sequence EAKEFRKCVVEWQMTNHPHDCPVCEEGGACHLQDMTVMTG. His99, Cys103, Cys106, Cys112, Cys151, Cys154, Cys157, Cys201, Cys228, Cys231, Cys235, and Cys263 together coordinate [4Fe-4S] cluster. The 4Fe-4S Mo/W bis-MGD-type domain occupies 221–277; that stretch reads MQFAPSICQQCSVGCNISPGERYGELRRIENRFHGSVNHYFLCDRGRFGYGYVNLPD.

This sequence belongs to the complex I 75 kDa subunit family. In terms of assembly, composed of 13 different subunits. Subunits NuoCD, E, F, and G constitute the peripheral sector of the complex. The cofactor is [2Fe-2S] cluster. [4Fe-4S] cluster is required as a cofactor.

It catalyses the reaction a quinone + NADH + 5 H(+)(in) = a quinol + NAD(+) + 4 H(+)(out). In terms of biological role, NDH-1 shuttles electrons from NADH, via FMN and iron-sulfur (Fe-S) centers, to quinones in the respiratory chain. The immediate electron acceptor for the enzyme in this species is believed to be ubiquinone. Couples the redox reaction to proton translocation (for every two electrons transferred, four hydrogen ions are translocated across the cytoplasmic membrane), and thus conserves the redox energy in a proton gradient. This is NADH-quinone oxidoreductase subunit G (nuoG) from Shewanella oneidensis (strain ATCC 700550 / JCM 31522 / CIP 106686 / LMG 19005 / NCIMB 14063 / MR-1).